We begin with the raw amino-acid sequence, 144 residues long: Large ribosomal subunit protein uL13 (144 aa).

The protein belongs to the universal ribosomal protein uL13 family. Part of the 50S ribosomal subunit.

This protein is one of the early assembly proteins of the 50S ribosomal subunit, although it is not seen to bind rRNA by itself. It is important during the early stages of 50S assembly. This is Large ribosomal subunit protein uL13 from Buchnera aphidicola subsp. Baizongia pistaciae (strain Bp).